Reading from the N-terminus, the 214-residue chain is Fruiting body protein SC14 (214 aa).

The first 18 residues, 1–18, serve as a signal peptide directing secretion; sequence MKLNIAILLAALAATASA. N-linked (GlcNAc...) asparagine glycans are attached at residues asparagine 61 and asparagine 144. The 124-residue stretch at 72–195 folds into the SCP domain; the sequence is LTAHNDERAQ…KSLWYYVCNY (124 aa).

It belongs to the CRISP family.

It is found in the secreted. In Schizophyllum commune (Split gill fungus), this protein is Fruiting body protein SC14 (SC14).